A 400-amino-acid chain; its full sequence is Trans-enoyl reductase ucsL (400 aa).

50–53 (TDHK) contributes to the NADP(+) binding site. 145-152 (SVHGSVAL) contributes to the substrate binding site. NADP(+) is bound by residues 204–207 (STAC), 227–230 (SPRN), Y245, and 292–293 (LE). 313–317 (GPVMF) is a binding site for substrate. Residue 389 to 390 (VS) coordinates NADP(+).

This sequence belongs to the zinc-containing alcohol dehydrogenase family. In terms of assembly, monomer.

It participates in mycotoxin biosynthesis. In terms of biological role, trans-enoyl reductase; part of the gene cluster that mediates the biosynthesis of UCS1025A, a member of the pyrrolizidinone family that acts as a strong telomerase inhibitor and displays potent antibacterial and antitumor properties. These compounds share a hemiaminal-containing pyrrolizidinone core fused with a gamma-lactone, giving a furopyrrolizidine that is connected to a decalin fragment. The polyketide synthase module (PKS) of the PKS-NRPS ucsA is responsible for the synthesis of the polyketide backbone via the condensation of an acetyl-CoA starter unit with 6 malonyl-CoA units. The downstream nonribosomal peptide synthetase (NRPS) module then amidates the carboxyl end of the polyketide with a 2S,3S-methylproline derived from L-isoleucine by the 2-oxoglutarate-dependent dioxygenase ucsF which converts L-isoleucine to (4S,5S)-4-methylpyrroline-5-carboxylate that is further converted to 2S,3S-methylproline by the pyrroline-5-carboxylate reductase ucsG. Reductive release of the completed aminoacyl polyketide from the assembly line can form the 3-pyrrolin-2-one structure via an intramolecular Knoevenagel reaction. Because ucsA lacks a designated enoylreductase (ER) domain, the required activity is provided the enoyl reductase ucsL. This keto acyclic precursor is the substrate of the Diels-Alderase ucsH, that catalyzes the Diels-Alder cycloaddition. Oxidation of the 3S-methyl group to a carboxylate by the cytochrome P450 monooxygenase ucsK allows an oxa-Michael cyclization that might involve the reductase/dehydrogenase ucsI and which furnishes the furopyrrolizidine. The oxidase ucsJ likely plays a critical role in stereoselective reduction of the C5-C6 double bond to afford the required R-configured carboxylate group. Further enolization and oxidation at C5 by an unidentified enzyme affords the last intermediate that can undergo oxa-Michael cyclization to yield UCS1025A. The sequence is that of Trans-enoyl reductase ucsL from Acremonium sp.